Consider the following 789-residue polypeptide: Probable phosphoketolase (789 aa).

This sequence belongs to the XFP family. It depends on thiamine diphosphate as a cofactor.

The protein is Probable phosphoketolase of Brucella abortus (strain 2308).